Here is a 378-residue protein sequence, read N- to C-terminus: Spermidine/putrescine import ATP-binding protein PotA (378 aa).

One can recognise an ABC transporter domain in the interval 18–248 (VQLAGIRKCF…PKNLFVAGFI (231 aa)). 50–57 (GPSGCGKT) provides a ligand contact to ATP.

The protein belongs to the ABC transporter superfamily. Spermidine/putrescine importer (TC 3.A.1.11.1) family. The complex is composed of two ATP-binding proteins (PotA), two transmembrane proteins (PotB and PotC) and a solute-binding protein (PotD).

It is found in the cell inner membrane. The catalysed reaction is ATP + H2O + polyamine-[polyamine-binding protein]Side 1 = ADP + phosphate + polyamineSide 2 + [polyamine-binding protein]Side 1.. Part of the ABC transporter complex PotABCD involved in spermidine/putrescine import. Responsible for energy coupling to the transport system. The polypeptide is Spermidine/putrescine import ATP-binding protein PotA (Shigella flexneri).